The sequence spans 781 residues: Tax1-binding protein 1 homolog A (781 aa).

2 coiled-coil regions span residues 148 to 453 (NSDI…QGDA) and 488 to 581 (DVEK…YMRE). Residues 441–465 (KLTQQQETQQGDANRNDASTETTLE) are compositionally biased toward polar residues. Disordered regions lie at residues 441-510 (KLTQ…EEEC) and 630-691 (ETRD…EAPA). The span at 484–495 (TVARDVEKSRDE) shows a compositional bias: basic and acidic residues. Residues 496–510 (EGNEQEEEDEEEEEC) show a composition bias toward acidic residues. A compositionally biased stretch (pro residues) spans 646-656 (RPPPLAPPPWG). UBZ1-type zinc fingers lie at residues 716–742 (HKQC…VESH) and 743–769 (WRVC…VHTH). The Zn(2+) site is built by Cys719, Cys722, His738, His742, Cys746, Cys749, His765, and His769.

Little expression is observed during pectoral fin development, except for an elevated level of expression in the distal mesenchyme cells of some samples.

Its function is as follows. May have anti-apoptotic activity. The polypeptide is Tax1-binding protein 1 homolog A (Danio rerio (Zebrafish)).